Consider the following 340-residue polypeptide: Tetraacyldisaccharide 4'-kinase (340 aa).

50–57 (HGGGAGKT) serves as a coordination point for ATP.

Belongs to the LpxK family.

The enzyme catalyses a lipid A disaccharide + ATP = a lipid IVA + ADP + H(+). The protein operates within glycolipid biosynthesis; lipid IV(A) biosynthesis; lipid IV(A) from (3R)-3-hydroxytetradecanoyl-[acyl-carrier-protein] and UDP-N-acetyl-alpha-D-glucosamine: step 6/6. In terms of biological role, transfers the gamma-phosphate of ATP to the 4'-position of a tetraacyldisaccharide 1-phosphate intermediate (termed DS-1-P) to form tetraacyldisaccharide 1,4'-bis-phosphate (lipid IVA). The protein is Tetraacyldisaccharide 4'-kinase of Rhodopseudomonas palustris (strain BisA53).